Here is a 241-residue protein sequence, read N- to C-terminus: Fatty acid metabolism regulator protein (241 aa).

The 69-residue stretch at Gln-11–Ile-79 folds into the HTH gntR-type domain. The segment at residues Glu-39 to Gln-58 is a DNA-binding region (H-T-H motif).

In terms of assembly, homodimer.

The protein resides in the cytoplasm. Its function is as follows. Multifunctional regulator of fatty acid metabolism. The sequence is that of Fatty acid metabolism regulator protein from Haemophilus influenzae (strain 86-028NP).